A 403-amino-acid chain; its full sequence is tRNA pseudouridine synthase 4 (403 aa).

The active-site Nucleophile is the Asp-75.

It belongs to the pseudouridine synthase TruB family.

It is found in the nucleus. It localises to the mitochondrion. The enzyme catalyses uridine(55) in tRNA = pseudouridine(55) in tRNA. It carries out the reaction a uridine in mRNA = a pseudouridine in mRNA. Functionally, responsible for synthesis of pseudouridine from uracil-55 in the psi GC loop of transfer RNAs. Also catalyzes pseudouridylation of mRNAs with the consensus sequence 5'-GGUUCRA-3'. This chain is tRNA pseudouridine synthase 4 (PUS4), found in Saccharomyces cerevisiae (strain ATCC 204508 / S288c) (Baker's yeast).